Reading from the N-terminus, the 243-residue chain is tRNA1(Val) (adenine(37)-N6)-methyltransferase (243 aa).

The protein belongs to the methyltransferase superfamily. tRNA (adenine-N(6)-)-methyltransferase family.

The protein resides in the cytoplasm. The enzyme catalyses adenosine(37) in tRNA1(Val) + S-adenosyl-L-methionine = N(6)-methyladenosine(37) in tRNA1(Val) + S-adenosyl-L-homocysteine + H(+). Functionally, specifically methylates the adenine in position 37 of tRNA(1)(Val) (anticodon cmo5UAC). The chain is tRNA1(Val) (adenine(37)-N6)-methyltransferase from Shewanella woodyi (strain ATCC 51908 / MS32).